We begin with the raw amino-acid sequence, 713 residues long: Polyribonucleotide nucleotidyltransferase (713 aa).

Residues D498 and D504 each coordinate Mg(2+). One can recognise a KH domain in the interval 565–631 (PRILSLKVPV…RIEDLTREAK (67 aa)). Residues 633–701 (GEIYEGTVTR…ERGKIDLIRP (69 aa)) form the S1 motif domain.

The protein belongs to the polyribonucleotide nucleotidyltransferase family. Mg(2+) is required as a cofactor.

Its subcellular location is the cytoplasm. The catalysed reaction is RNA(n+1) + phosphate = RNA(n) + a ribonucleoside 5'-diphosphate. Functionally, involved in mRNA degradation. Catalyzes the phosphorolysis of single-stranded polyribonucleotides processively in the 3'- to 5'-direction. The sequence is that of Polyribonucleotide nucleotidyltransferase from Thermus thermophilus (strain ATCC 27634 / DSM 579 / HB8).